A 140-amino-acid chain; its full sequence is Transcription antitermination protein NusB (140 aa).

This sequence belongs to the NusB family.

In terms of biological role, involved in transcription antitermination. Required for transcription of ribosomal RNA (rRNA) genes. Binds specifically to the boxA antiterminator sequence of the ribosomal RNA (rrn) operons. The protein is Transcription antitermination protein NusB of Leptospira biflexa serovar Patoc (strain Patoc 1 / Ames).